We begin with the raw amino-acid sequence, 1136 residues long: Collagen alpha-1(XIX) chain (1136 aa).

An N-terminal signal peptide occupies residues 1–23; the sequence is MRHTGSWKLWTWVTTFLLPACTC. Asn47 carries N-linked (GlcNAc...) asparagine glycosylation. The 185-residue stretch at 47 to 231 folds into the Laminin G-like domain; the sequence is NKSELSGFDL…LHQLRIYCNA (185 aa). Disordered stretches follow at residues 252–272, 289–673, 699–1005, and 1043–1136; these read DFGS…SSYL, EEAG…PGDP, GLKS…TPAD, and SAQA…AGGK. The span at 254-266 shows a compositional bias: low complexity; the sequence is GSTTSSWGTSNTG. The tract at residues 289 to 348 is triple-helical region 1 (COL1); sequence EEAGLPGTLRSIGHKGDKGEPGEHGLDGTPGLPGQKGEQGLEGIKGEIGEKGEPGAKGDS. 3 consecutive Collagen-like domains span residues 292–346, 347–388, and 389–430; these read GLPG…GAKG, DSGL…ALTG, and SIGI…GLQG. 2 stretches are compositionally biased toward basic and acidic residues: residues 302 to 314 and 332 to 344; these read HKGD…EHGL and IKGE…EPGA. Residues 367–426 are triple-helical region 2 (COL2); the sequence is GPPGPKGDKGDMGPPGPPALTGSIGIQGPQGPPGKEGQRGRRGKTGPPGNPGPPGPPGPP. Over residues 387 to 401 the composition is skewed to low complexity; the sequence is TGSIGIQGPQGPPGK. The span at 414 to 426 shows a compositional bias: pro residues; sequence PGNPGPPGPPGPP. Low complexity predominate over residues 428 to 437; it reads LQGLQQPFGG. The tract at residues 442–682 is triple-helical region 3 (COL3); that stretch reads GTGEHGASGP…PIALPLLGDI (241 aa). The segment covering 472–490 has biased composition (basic and acidic residues); that stretch reads HKGEPGEPLTKGEKGDRGE. 2 stretches are compositionally biased toward low complexity: residues 511-523 and 567-577; these read LLGS…QQGP and PGLKGDAGPPG. Collagen-like domains are found at residues 519–577, 578–618, 620–673, 722–777, 778–810, and 833–891; these read GQQG…GPPG, ISLP…GPPG, GIPG…PGDP, KGDV…GPPG, LTGR…GPPG, and GYPG…APGP. Over residues 634 to 645 the composition is skewed to low complexity; sequence PGIQGPRGLPGL. Positions 694–812 are triple-helical region 4 (COL4); that stretch reads QANVPGLKSI…PGPPGPPGVP (119 aa). 2 stretches are compositionally biased toward basic and acidic residues: residues 714-725 and 737-758; these read GKYDPAARKGDV and EGPK…KGDE. The span at 764–788 shows a compositional bias: low complexity; it reads PGLSGAPGPTGPPGLTGRTGHPGPT. 2 stretches are compositionally biased toward pro residues: residues 800 to 811 and 834 to 846; these read PGKPGPPGPPGV and YPGP…PKGD. Residues 827–1006 form a triple-helical region 5 (COL5) region; it reads GGVNVPGYPG…PGIPGTPADA (180 aa). Positions 877-886 are enriched in low complexity; that stretch reads PGIAGISGKP. Residues 937-948 are compositionally biased toward basic and acidic residues; it reads PGDRGPKGERGD. Residues 946 to 948 carry the Cell attachment site motif; it reads RGD. The tract at residues 1048–1105 is triple-helical region 6 (COL6); the sequence is GRPGPPGKDGLPGPPGDPGPQGYRGQKGERGEPGIGLPGSPGLPGSSAVGLPGSPGAP. A compositionally biased stretch (low complexity) spans 1087–1101; the sequence is SPGLPGSSAVGLPGS. Over residues 1102 to 1113 the composition is skewed to pro residues; sequence PGAPGPQGPPGP.

This sequence belongs to the fibril-associated collagens with interrupted helices (FACIT) family. In terms of assembly, oligomer; disulfide-linked. In terms of processing, prolines at the third position of the tripeptide repeating unit (G-X-Y) are hydroxylated in some or all of the chains.

It localises to the secreted. Its subcellular location is the extracellular space. The protein resides in the extracellular matrix. In terms of biological role, may act as a cross-bridge between fibrils and other extracellular matrix molecules. Involved in skeletal myogenesis in the developing esophagus. May play a role in organization of the pericellular matrix or the sphinteric smooth muscle. This is Collagen alpha-1(XIX) chain from Mus musculus (Mouse).